The following is a 77-amino-acid chain: Large ribosomal subunit protein eL13 (77 aa).

It belongs to the eukaryotic ribosomal protein eL13 family.

This is Large ribosomal subunit protein eL13 from Sulfurisphaera tokodaii (strain DSM 16993 / JCM 10545 / NBRC 100140 / 7) (Sulfolobus tokodaii).